Consider the following 498-residue polypeptide: Galactose-1-phosphate uridylyltransferase (498 aa).

This sequence belongs to the galactose-1-phosphate uridylyltransferase type 2 family.

Its subcellular location is the cytoplasm. It catalyses the reaction alpha-D-galactose 1-phosphate + UDP-alpha-D-glucose = alpha-D-glucose 1-phosphate + UDP-alpha-D-galactose. It functions in the pathway carbohydrate metabolism; galactose metabolism. This chain is Galactose-1-phosphate uridylyltransferase, found in Clostridium perfringens (strain 13 / Type A).